The primary structure comprises 418 residues: Protein fuzzy homolog (418 aa).

This sequence belongs to the fuzzy family. In terms of assembly, interacts with rsg1. Interacts with intu and wdpcp; fuz, intu and wdpcp probably form the core CPLANE (ciliogenesis and planar polarity effectors) complex.

The protein localises to the cytoplasm. It is found in the cytoskeleton. The protein resides in the cilium basal body. In terms of biological role, probable planar cell polarity effector involved in cilium biogenesis. Proposed to function as core component of the CPLANE (ciliogenesis and planar polarity effectors) complex involved in the recruitment of peripheral IFT-A proteins to basal bodies. May regulate protein and membrane transport to the cilium. May control the organization of the apical actin cytoskeleton, which is essential for the normal orientation of elongating ciliary microtubules. In Xenopus tropicalis (Western clawed frog), this protein is Protein fuzzy homolog (fuz).